A 492-amino-acid chain; its full sequence is GMP reductase (492 aa).

Residues 30 to 31 (SR) and R78 each bind NADP(+). CBS domains follow at residues 99–162 (LIED…LVET) and 164–223 (MTPV…RNAT). Residues 260–262 (DIA) and 313–314 (VG) contribute to the NADP(+) site. G314, G316, and C319 together coordinate K(+). C319 serves as the catalytic Thioimidate intermediate. The active-site Proton donor/acceptor is T321. R322 contacts K(+). GMP contacts are provided by residues 352 to 354 (DGG), 375 to 376 (GN), and 401 to 403 (GMA). NADP(+) contacts are provided by residues M402 and 454 to 457 (SGIS). The Microbody targeting signal signature appears at 490-492 (SKL).

It belongs to the IMPDH/GMPR family. GuaC type 1 subfamily. In terms of assembly, homotetramer.

It localises to the glycosome. The catalysed reaction is IMP + NH4(+) + NADP(+) = GMP + NADPH + 2 H(+). Activated by GTP and inhibited by XMP and the IMP analogs allopurinol nucleotide and thiopurinol nucleotide. Its function is as follows. Catalyzes the irreversible NADPH-dependent deamination of GMP to IMP. It functions in the conversion of nucleobase, nucleoside and nucleotide derivatives of G to A nucleotides, and in maintaining the intracellular balance of A and G nucleotides. The sequence is that of GMP reductase from Leishmania donovani.